A 121-amino-acid chain; its full sequence is Large ribosomal subunit protein uL14 (121 aa).

It belongs to the universal ribosomal protein uL14 family. As to quaternary structure, part of the 50S ribosomal subunit. Forms a cluster with proteins L3 and L19. In the 70S ribosome, L14 and L19 interact and together make contacts with the 16S rRNA in bridges B5 and B8.

Binds to 23S rRNA. Forms part of two intersubunit bridges in the 70S ribosome. This is Large ribosomal subunit protein uL14 from Legionella pneumophila (strain Paris).